The chain runs to 236 residues: NEP1-interacting protein 1 (236 aa).

The Lumenal, thylakoid portion of the chain corresponds to 1–44; it reads MASSRFQSGFCPISSCPSLENFIERIKDACRFTLSAVLGTILSA. A helical membrane pass occupies residues 45-65; sequence VLTFFFALVGTLLGALTGALI. Topologically, residues 66 to 78 are stromal; that stretch reads GQETESGFIRGAA. The chain crosses the membrane as a helical span at residues 79 to 99; that stretch reads VGAISGAVFSIEVFESSLVLW. Residues 100-104 lie on the Lumenal, thylakoid side of the membrane; the sequence is KSNES. The chain crosses the membrane as a helical span at residues 105-125; sequence RFGCLLYLIDVIVSLISGRLV. At 126 to 236 the chain is on the stromal side; that stretch reads RERIGPAMLS…GSCPMCRRDL (111 aa). An RING-type; atypical zinc finger spans residues 191 to 233; the sequence is CSVCLQDFQLGETVRSLPHCHHMFHLPCIDNWLFRHGSCPMCR.

This sequence belongs to the RING-type zinc finger family. NIP subfamily. As to quaternary structure, interacts with RPOT2.

It is found in the plastid. The protein localises to the chloroplast thylakoid membrane. Intrinsic thylakoid membrane protein that fixes RPOT2 on the stromal side of the thylakoid membrane. The sequence is that of NEP1-interacting protein 1 (NIP1) from Arabidopsis thaliana (Mouse-ear cress).